The chain runs to 307 residues: Woronin sorting complex protein (307 aa).

3 helical membrane-spanning segments follow: residues 106–125 (MATY…IWIL), 146–167 (NLIV…IAGA), and 207–227 (AWMP…NYIT). The span at 241-264 (GDGAHGDHRHDRERERDRERERHS) shows a compositional bias: basic and acidic residues. The interval 241–307 (GDGAHGDHRH…YPSLGQNPRY (67 aa)) is disordered. The segment covering 266-278 (PPHGHGPSHGGRP) has biased composition (low complexity).

This sequence belongs to the peroxisomal membrane protein PXMP2/4 family. In terms of assembly, self-assembles into detergent-resistant oligomers and forms a complex with hex-1 assemblies.

Its subcellular location is the peroxisome membrane. The protein resides in the cell septum. Functionally, woronin sorting complex protein involved in both Woronin bodies (WB) formation and inherence. Localizes to large peroxisome membranes where it self-assembles into detergent-resistant oligomers that envelop hex-1 assemblies, producing asymmetrical nascent WBs. These structures are then delivered to the cell cortex, which permits partitioning of the nascent WB and WB inheritance. The sequence is that of Woronin sorting complex protein from Neurospora crassa (strain ATCC 24698 / 74-OR23-1A / CBS 708.71 / DSM 1257 / FGSC 987).